Here is a 146-residue protein sequence, read N- to C-terminus: MKLHELKAAEGSRKVRNRVGRGTSSGNGKTSGRGQKGQKSRSGGGVRLGFEGGQTPLFRRMPKRGFSNINTKEYALVNLDQLNVFEDGTEVTPVVLKEAGIVRAEKSGVKILGNGELTKKLTVKAAKFSKSAEAAITAKGGSIEVI.

The segment covering 1-13 has biased composition (basic and acidic residues); that stretch reads MKLHELKAAEGSR. Residues 1-61 form a disordered region; sequence MKLHELKAAE…GGQTPLFRRM (61 aa). Gly residues-rich tracts occupy residues 23–35 and 42–52; these read TSSG…GRGQ and SGGGVRLGFEG.

This sequence belongs to the universal ribosomal protein uL15 family. Part of the 50S ribosomal subunit.

In terms of biological role, binds to the 23S rRNA. The protein is Large ribosomal subunit protein uL15 of Streptococcus uberis (strain ATCC BAA-854 / 0140J).